The chain runs to 202 residues: 3-isopropylmalate dehydratase small subunit (202 aa).

The protein belongs to the LeuD family. LeuD type 1 subfamily. Heterodimer of LeuC and LeuD.

It carries out the reaction (2R,3S)-3-isopropylmalate = (2S)-2-isopropylmalate. It participates in amino-acid biosynthesis; L-leucine biosynthesis; L-leucine from 3-methyl-2-oxobutanoate: step 2/4. Functionally, catalyzes the isomerization between 2-isopropylmalate and 3-isopropylmalate, via the formation of 2-isopropylmaleate. The sequence is that of 3-isopropylmalate dehydratase small subunit from Caulobacter vibrioides (strain ATCC 19089 / CIP 103742 / CB 15) (Caulobacter crescentus).